A 499-amino-acid chain; its full sequence is tRNA (guanine(37)-N(1))-methyltransferase (499 aa).

Residues 1–44 (MKIALPVFQKFNRLISSCKMSGVFPYNPPVNRQMRELDRSFFIT) constitute a mitochondrion transit peptide. S-adenosyl-L-methionine-binding positions include His-268, 307–308 (DL), 335–336 (DG), and Asn-399.

Belongs to the class I-like SAM-binding methyltransferase superfamily. TRM5/TYW2 family. Monomer.

It localises to the mitochondrion matrix. Its subcellular location is the nucleus. The protein resides in the cytoplasm. The catalysed reaction is guanosine(37) in tRNA + S-adenosyl-L-methionine = N(1)-methylguanosine(37) in tRNA + S-adenosyl-L-homocysteine + H(+). Specifically methylates the N1 position of guanosine-37 in various cytoplasmic and mitochondrial tRNAs. Methylation is not dependent on the nature of the nucleoside 5' of the target nucleoside. This is the first step in the biosynthesis of wybutosine (yW), a modified base adjacent to the anticodon of tRNAs and required for accurate decoding. Postspliced cytoplasmic tRNAs are imported into the nucleus, where this first step seems to take place, after which they are reexported to the cytoplasm, where the yW sythesis is completed by cytoplasmic enzymes. This Saccharomyces cerevisiae (strain ATCC 204508 / S288c) (Baker's yeast) protein is tRNA (guanine(37)-N(1))-methyltransferase.